The following is a 442-amino-acid chain: Yes-associated protein homolog 1 (442 aa).

Basic residues predominate over residues 1–10 (MASKSIHKKH). A disordered region spans residues 1 to 84 (MASKSIHKKH…GSVDESSRTA (84 aa)). Polar residues-rich tracts occupy residues 13–22 (NSQQDKNQFS) and 55–71 (LPSSYYHQKRNPGSSAH). Ser104 carries the phosphoserine modification. The span at 108-120 (LHTSVNNGQSSAT) shows a compositional bias: polar residues. Residues 108 to 136 (LHTSVNNGQSSATVPHPSHHNVHHQHSKS) are disordered. Residues 124–134 (PSHHNVHHQHS) show a composition bias toward basic residues. Positions 203-236 (LPMPQGWEMCYDSDGVRYFKDHNSKTTTWDDPRL) constitute a WW domain.

This sequence belongs to the YAP1 family. Highly divergent. Interacts (via WW domain) with wts-1 (via N-terminus). Interacts (via WW domain) with egl-44; the interaction may regulate transcription. As to expression, expressed in epithelia, hypodermis, muscles, pharynx, intestine, gonadal sheath cells, vulva, spermatheca and in excretory tissue.

The protein resides in the cytoplasm. It is found in the nucleus. It localises to the cell projection. Its subcellular location is the cilium. The protein localises to the cytoskeleton. The protein resides in the cilium axoneme. In terms of biological role, plays a role in thermal stress response and in aging. The polypeptide is Yes-associated protein homolog 1 (Caenorhabditis elegans).